The following is a 556-amino-acid chain: Probable zinc metalloprotease EGY2, chloroplastic (556 aa).

The N-terminal 64 residues, 1-64 (MNLAVASFRG…VFRKRETLVR (64 aa)), are a transit peptide targeting the chloroplast. The tract at residues 63–133 (VRVTETQTEP…DGDKLEVSSG (71 aa)) is disordered. 7 consecutive transmembrane segments (helical) span residues 267 to 287 (AVPE…TLFL), 311 to 331 (LPGA…HILV), 336 to 356 (GIKL…FGAI), 374 to 394 (AAGP…GLFV), 437 to 457 (PLVI…IPAG), 484 to 504 (LLGL…LIFF), and 527 to 547 (LGIL…FAFT).

Belongs to the peptidase M50B family.

The protein localises to the plastid. It is found in the chloroplast membrane. Probable membrane-associated metalloprotease that may be involved in chloroplast development. This is Probable zinc metalloprotease EGY2, chloroplastic (EGY2) from Arabidopsis thaliana (Mouse-ear cress).